The primary structure comprises 486 residues: Membrane-bound lytic murein transglycosylase F (486 aa).

A signal peptide spans 1-21 (MKRLKINYILIGVVTLLLALA). The interval 22–268 (LWPNITWRGG…RLEEKYLGHV (247 aa)) is non-LT domain. The tract at residues 269-486 (GSFDYVDTKT…AVTPELALNF (218 aa)) is LT domain. Glutamate 313 is an active-site residue.

In the N-terminal section; belongs to the bacterial solute-binding protein 3 family. This sequence in the C-terminal section; belongs to the transglycosylase Slt family.

The protein localises to the cell outer membrane. It catalyses the reaction Exolytic cleavage of the (1-&gt;4)-beta-glycosidic linkage between N-acetylmuramic acid (MurNAc) and N-acetylglucosamine (GlcNAc) residues in peptidoglycan, from either the reducing or the non-reducing ends of the peptidoglycan chains, with concomitant formation of a 1,6-anhydrobond in the MurNAc residue.. In terms of biological role, murein-degrading enzyme that degrades murein glycan strands and insoluble, high-molecular weight murein sacculi, with the concomitant formation of a 1,6-anhydromuramoyl product. Lytic transglycosylases (LTs) play an integral role in the metabolism of the peptidoglycan (PG) sacculus. Their lytic action creates space within the PG sacculus to allow for its expansion as well as for the insertion of various structures such as secretion systems and flagella. In Serratia proteamaculans (strain 568), this protein is Membrane-bound lytic murein transglycosylase F.